The following is a 171-amino-acid chain: tRNA-specific adenosine deaminase (171 aa).

In terms of domain architecture, CMP/dCMP-type deaminase spans 6 to 133; it reads EEQTYFMQEA…ERLNHRVQVE (128 aa). Zn(2+) is bound at residue His-57. The Proton donor role is filled by Glu-59. The Zn(2+) site is built by Cys-87 and Cys-90.

This sequence belongs to the cytidine and deoxycytidylate deaminase family. As to quaternary structure, homodimer. Zn(2+) is required as a cofactor.

It catalyses the reaction adenosine(34) in tRNA + H2O + H(+) = inosine(34) in tRNA + NH4(+). Functionally, catalyzes the deamination of adenosine to inosine at the wobble position 34 of tRNA(Arg2). The sequence is that of tRNA-specific adenosine deaminase from Streptococcus pyogenes serotype M3 (strain ATCC BAA-595 / MGAS315).